A 117-amino-acid polypeptide reads, in one-letter code: Ribonuclease P protein component (117 aa).

The protein belongs to the RnpA family. As to quaternary structure, consists of a catalytic RNA component (M1 or rnpB) and a protein subunit.

It catalyses the reaction Endonucleolytic cleavage of RNA, removing 5'-extranucleotides from tRNA precursor.. In terms of biological role, RNaseP catalyzes the removal of the 5'-leader sequence from pre-tRNA to produce the mature 5'-terminus. It can also cleave other RNA substrates such as 4.5S RNA. The protein component plays an auxiliary but essential role in vivo by binding to the 5'-leader sequence and broadening the substrate specificity of the ribozyme. This is Ribonuclease P protein component from Aliivibrio salmonicida (strain LFI1238) (Vibrio salmonicida (strain LFI1238)).